A 317-amino-acid chain; its full sequence is Apolipoprotein E (317 aa).

An N-terminal signal peptide occupies residues 1-18; sequence MKVLWAALLVTFLAGCQA. Tandem repeats lie at residues 80 to 101, 102 to 123, 124 to 145, 146 to 167, 168 to 189, 190 to 211, 212 to 233, and 234 to 255. The tract at residues 80–255 is 8 X 22 AA approximate tandem repeats; it reads TLMDETMKEL…RLDEVKEQVA (176 aa). A Methionine sulfoxide modification is found at Met-143. Ser-147 carries the post-translational modification Phosphoserine. The tract at residues 158–168 is LDL and other lipoprotein receptors binding; sequence HLRKLRKRLLR. 162 to 165 is a heparin binding site; sequence LRKR. Residues 210-290 form a lipid-binding and lipoprotein association region; the sequence is AATVGSLASQ…SWFEPLVEDM (81 aa). Residue 229–236 coordinates heparin; sequence GERLRARM. Residues 266–317 form a homooligomerization region; it reads QQISLQAEAFQARLKSWFEPLVEDMQRQWAGLVEKVQAAVGASTAPVPIDNH. Positions 278–290 are specificity for association with VLDL; it reads RLKSWFEPLVEDM.

Belongs to the apolipoprotein A1/A4/E family. In terms of assembly, homotetramer. May interact with ABCA1; functionally associated with ABCA1 in the biogenesis of HDLs. May interact with APP/A4 amyloid-beta peptide; the interaction is extremely stable in vitro but its physiological significance is unclear. May interact with MAPT. May interact with MAP2. In the cerebrospinal fluid, interacts with secreted SORL1. Interacts with PMEL; this allows the loading of PMEL luminal fragment on ILVs to induce fibril nucleation. Post-translationally, APOE exists as multiple glycosylated and sialylated glycoforms within cells and in plasma. The extent of glycosylation and sialylation are tissue and context specific. Glycated in plasma VLDL. In terms of processing, phosphorylated by FAM20C in the extracellular medium.

The protein resides in the secreted. It is found in the extracellular space. It localises to the extracellular matrix. The protein localises to the extracellular vesicle. Its subcellular location is the endosome. The protein resides in the multivesicular body. In terms of biological role, APOE is an apolipoprotein, a protein associating with lipid particles, that mainly functions in lipoprotein-mediated lipid transport between organs via the plasma and interstitial fluids. APOE is a core component of plasma lipoproteins and is involved in their production, conversion and clearance. Apolipoproteins are amphipathic molecules that interact both with lipids of the lipoprotein particle core and the aqueous environment of the plasma. As such, APOE associates with chylomicrons, chylomicron remnants, very low density lipoproteins (VLDL) and intermediate density lipoproteins (IDL) but shows a preferential binding to high-density lipoproteins (HDL). It also binds a wide range of cellular receptors including the LDL receptor/LDLR, the LDL receptor-related proteins LRP1, LRP2 and LRP8 and the very low-density lipoprotein receptor/VLDLR that mediate the cellular uptake of the APOE-containing lipoprotein particles. Finally, APOE also has a heparin-binding activity and binds heparan-sulfate proteoglycans on the surface of cells, a property that supports the capture and the receptor-mediated uptake of APOE-containing lipoproteins by cells. A main function of APOE is to mediate lipoprotein clearance through the uptake of chylomicrons, VLDLs, and HDLs by hepatocytes. APOE is also involved in the biosynthesis by the liver of VLDLs as well as their uptake by peripheral tissues ensuring the delivery of triglycerides and energy storage in muscle, heart and adipose tissues. By participating in the lipoprotein-mediated distribution of lipids among tissues, APOE plays a critical role in plasma and tissues lipid homeostasis. APOE is also involved in two steps of reverse cholesterol transport, the HDLs-mediated transport of cholesterol from peripheral tissues to the liver, and thereby plays an important role in cholesterol homeostasis. First, it is functionally associated with ABCA1 in the biogenesis of HDLs in tissues. Second, it is enriched in circulating HDLs and mediates their uptake by hepatocytes. APOE also plays an important role in lipid transport in the central nervous system, regulating neuron survival and sprouting. This Macaca fascicularis (Crab-eating macaque) protein is Apolipoprotein E (APOE).